A 460-amino-acid chain; its full sequence is Serine--tRNA ligase (460 aa).

255–257 (TAE) is a binding site for L-serine. ATP is bound by residues 286–288 (RKE) and V302. L-serine is bound at residue E309. Residue 373 to 376 (EMVS) participates in ATP binding. T409 contacts L-serine.

This sequence belongs to the class-II aminoacyl-tRNA synthetase family. Type-1 seryl-tRNA synthetase subfamily. As to quaternary structure, homodimer. The tRNA molecule binds across the dimer.

Its subcellular location is the cytoplasm. It carries out the reaction tRNA(Ser) + L-serine + ATP = L-seryl-tRNA(Ser) + AMP + diphosphate + H(+). The enzyme catalyses tRNA(Sec) + L-serine + ATP = L-seryl-tRNA(Sec) + AMP + diphosphate + H(+). It participates in aminoacyl-tRNA biosynthesis; selenocysteinyl-tRNA(Sec) biosynthesis; L-seryl-tRNA(Sec) from L-serine and tRNA(Sec): step 1/1. In terms of biological role, catalyzes the attachment of serine to tRNA(Ser). Is also able to aminoacylate tRNA(Sec) with serine, to form the misacylated tRNA L-seryl-tRNA(Sec), which will be further converted into selenocysteinyl-tRNA(Sec). This is Serine--tRNA ligase from Aeropyrum pernix (strain ATCC 700893 / DSM 11879 / JCM 9820 / NBRC 100138 / K1).